Reading from the N-terminus, the 62-residue chain is Large ribosomal subunit protein eL37 (62 aa).

Zn(2+) contacts are provided by Cys-20, Cys-23, Cys-35, and Cys-38. The C4-type zinc-finger motif lies at 20–38 (CRRCGRRAYHVRKGYCAAC).

This sequence belongs to the eukaryotic ribosomal protein eL37 family. Zn(2+) is required as a cofactor.

In terms of biological role, binds to the 23S rRNA. This is Large ribosomal subunit protein eL37 from Methanopyrus kandleri (strain AV19 / DSM 6324 / JCM 9639 / NBRC 100938).